The primary structure comprises 107 residues: DNA-directed RNA polymerase subunit omega (107 aa).

The segment at 81 to 107 (MEEEAAKGNADAGQGEGDAPKTPGQDG) is disordered.

It belongs to the RNA polymerase subunit omega family. As to quaternary structure, the RNAP catalytic core consists of 2 alpha, 1 beta, 1 beta' and 1 omega subunit. When a sigma factor is associated with the core the holoenzyme is formed, which can initiate transcription.

It carries out the reaction RNA(n) + a ribonucleoside 5'-triphosphate = RNA(n+1) + diphosphate. In terms of biological role, promotes RNA polymerase assembly. Latches the N- and C-terminal regions of the beta' subunit thereby facilitating its interaction with the beta and alpha subunits. The sequence is that of DNA-directed RNA polymerase subunit omega from Alkalilimnicola ehrlichii (strain ATCC BAA-1101 / DSM 17681 / MLHE-1).